The primary structure comprises 877 residues: DNA polymerase I (877 aa).

The region spanning 177–270 (TPAQFIDLKA…LEDLVYSGPD (94 aa)) is the 5'-3' exonuclease domain. A 3'-5' exonuclease domain is found at 302 to 465 (DFTIVDQISQ…TEPILLEKLS (164 aa)).

It belongs to the DNA polymerase type-A family. As to quaternary structure, single-chain monomer with multiple functions.

It carries out the reaction DNA(n) + a 2'-deoxyribonucleoside 5'-triphosphate = DNA(n+1) + diphosphate. Its function is as follows. In addition to polymerase activity, this DNA polymerase exhibits 3'-5' and 5'-3' exonuclease activity. The polypeptide is DNA polymerase I (polA) (Streptococcus pneumoniae (strain ATCC BAA-255 / R6)).